The following is a 196-amino-acid chain: Early light-induced protein, chloroplastic (196 aa).

The transit peptide at 1 to 48 (MAVSSCQSIMSNSMTNISSRSRVNQFTNIPSVYIPTLRRNVSLKVRSM) directs the protein to the chloroplast. Residues 47-57 (SMAEGEPKEQS) are compositionally biased toward basic and acidic residues. Residues 47–81 (SMAEGEPKEQSKVAVDPTTPTASTPTPQPAYTRPP) form a disordered region. Transmembrane regions (helical) follow at residues 105 to 125 (LAMI…QGLS), 132 to 152 (GVAW…IPFF), and 176 to 196 (IAML…TSLV).

This sequence belongs to the ELIP/psbS family.

It localises to the plastid. Its subcellular location is the chloroplast membrane. Functionally, probably involved in the integration of pigments into the mature pigment-protein complexes. This Pisum sativum (Garden pea) protein is Early light-induced protein, chloroplastic.